We begin with the raw amino-acid sequence, 366 residues long: Flagellar P-ring protein (366 aa).

A signal peptide spans 1 to 20 (MVIKFLSALILLLVTTAVQA).

It belongs to the FlgI family. The basal body constitutes a major portion of the flagellar organelle and consists of four rings (L,P,S, and M) mounted on a central rod.

It localises to the periplasm. The protein resides in the bacterial flagellum basal body. Its function is as follows. Assembles around the rod to form the L-ring and probably protects the motor/basal body from shearing forces during rotation. This is Flagellar P-ring protein from Escherichia coli O6:H1 (strain CFT073 / ATCC 700928 / UPEC).